A 162-amino-acid chain; its full sequence is UPF0114 protein PSPA7_5214 (162 aa).

3 helical membrane passes run 15-35 (LLAP…IKFF), 53-73 (LILV…LVMV), and 136-156 (LMWY…MGYL).

It belongs to the UPF0114 family.

It is found in the cell membrane. This Pseudomonas paraeruginosa (strain DSM 24068 / PA7) (Pseudomonas aeruginosa (strain PA7)) protein is UPF0114 protein PSPA7_5214.